We begin with the raw amino-acid sequence, 70 residues long: Large ribosomal subunit protein bL31 (70 aa).

Residues C16, C18, C38, and C41 each coordinate Zn(2+).

Belongs to the bacterial ribosomal protein bL31 family. Type A subfamily. As to quaternary structure, part of the 50S ribosomal subunit. Zn(2+) serves as cofactor.

Its function is as follows. Binds the 23S rRNA. In Saccharopolyspora erythraea (strain ATCC 11635 / DSM 40517 / JCM 4748 / NBRC 13426 / NCIMB 8594 / NRRL 2338), this protein is Large ribosomal subunit protein bL31.